We begin with the raw amino-acid sequence, 211 residues long: Urease accessory protein UreG (211 aa).

A GTP-binding site is contributed by 8–15 (GPVGSGKT).

This sequence belongs to the SIMIBI class G3E GTPase family. UreG subfamily. Homodimer. UreD, UreF and UreG form a complex that acts as a GTP-hydrolysis-dependent molecular chaperone, activating the urease apoprotein by helping to assemble the nickel containing metallocenter of UreC. The UreE protein probably delivers the nickel.

Its subcellular location is the cytoplasm. Its function is as follows. Facilitates the functional incorporation of the urease nickel metallocenter. This process requires GTP hydrolysis, probably effectuated by UreG. The polypeptide is Urease accessory protein UreG (Metallosphaera sedula (strain ATCC 51363 / DSM 5348 / JCM 9185 / NBRC 15509 / TH2)).